The primary structure comprises 149 residues: Protein DOWN-REGULATED IN DIF1 11 (149 aa).

Positions 1 to 22 (MEKAILITFLIATTSMVYQTIG) are cleaved as a signal peptide.

Mostly expressed in embryo sac cells. Restricted to synergid cells, especially in the filiform apparatus of mature female gametophyte, via MYB98-mediated transcription regulation. Also detected at low levels in egg and central cells.

The sequence is that of Protein DOWN-REGULATED IN DIF1 11 from Arabidopsis thaliana (Mouse-ear cress).